The chain runs to 695 residues: Elongation factor G (695 aa).

The 275-residue stretch at 9–283 folds into the tr-type G domain; sequence EKIRNIGIVA…AVIDYLPSPL (275 aa). GTP-binding positions include 18–25, 82–86, and 136–139; these read AHIDAGKT, DTPGH, and NKMD.

Belongs to the TRAFAC class translation factor GTPase superfamily. Classic translation factor GTPase family. EF-G/EF-2 subfamily.

It is found in the cytoplasm. In terms of biological role, catalyzes the GTP-dependent ribosomal translocation step during translation elongation. During this step, the ribosome changes from the pre-translocational (PRE) to the post-translocational (POST) state as the newly formed A-site-bound peptidyl-tRNA and P-site-bound deacylated tRNA move to the P and E sites, respectively. Catalyzes the coordinated movement of the two tRNA molecules, the mRNA and conformational changes in the ribosome. This is Elongation factor G from Petrotoga mobilis (strain DSM 10674 / SJ95).